The primary structure comprises 134 residues: Small ribosomal subunit protein uS8c (134 aa).

The protein belongs to the universal ribosomal protein uS8 family. In terms of assembly, part of the 30S ribosomal subunit.

The protein resides in the plastid. Its subcellular location is the chloroplast. One of the primary rRNA binding proteins, it binds directly to 16S rRNA central domain where it helps coordinate assembly of the platform of the 30S subunit. In Pelargonium hortorum (Common geranium), this protein is Small ribosomal subunit protein uS8c (rps8).